A 938-amino-acid chain; its full sequence is MPAVSKGDGMRGLAVFISDIRNCKSKEAEIKRINKELANIRSKFKGDKALDGYSKKKYVCKLLFIFLLGHDIDFGHMEAVNLLSSNRYTEKQIGYLFISVLVNSNSELIRLINNAIKNDLASRNPTFMGLALHCIANVGSREMAEAFAGEIPKILVAGDTMDSVKQSAALCLLRLHRASPDLVPVGDWTSRVVHLLNDQHLGVVTAATSLITTLAQKNPEEFKTSVSLAVSRLSRIVTSASTDLQDYTYYFVPAPWLSVKLLRLLQCYPPPEDPAVRGRLTECLEAILNKAQEPPKSKKVQHSNAKNAVLFEAISLVTHHDSEPNLLVRACNQLGQFLQHRETNLRYLALESMCTLASSEFSHEAVKTHIETVINALKTERDVSVRQRAVDLLYAMCDRSNAQQIVAEMLSYLETADYSIREEIVLKVAILAEKYAVDYTWYVDTILNLIRIAGDYVSEEVWYRVIQIVINRDDVQGYAAKTVFEALQAPACHENLVKVGGYILGEFGNLIAGDPRSSPLTQFHLLHSKFHLCSVPTRALLLSTYIKFVNLFPEVKGTIQDVLRSDSQLKNADVELQQRAVEYLRLSTVASTDILATVLEEMPPFPERESSILAKLKKKKGPSTVTDLEEAKRERSADVNGGPEPALASTSAVSTPSPSADLLGLGAAPPVPAGPPPSSGGLLVDVFSDSPSAAAPLAPGSEDNFARFVCKNNGVLFENQLLQIGLKSEFRQNLGRMFIFYGNKTSTQFLNFTPTLICSDDLQANLSLQTKPVDPTVDGGAQVQQAVNIECVSDFTEAPVLNIQFRYGGTFQNVSVKLPITLNKFFQPTEMASQDFFQRWKQLSNPQQEVQSIFKAKHPMDTEVTKAKIIGFGSALLEEVDPNPANFVGAGIIHTRTAQIGCLLRLEPNLQAQMYRLTLRTSRETVSQRLCELLSEQF.

Residues 11 to 12 (RG), K43, Y53, and 57 to 61 (KYVCK) contribute to the a 1,2-diacyl-sn-glycero-3-phospho-(1D-myo-inositol-3,4,5-trisphosphate) site. A disordered region spans residues 616-677 (LKKKKGPSTV…APPVPAGPPP (62 aa)). A compositionally biased stretch (low complexity) spans 645–668 (PALASTSAVSTPSPSADLLGLGAA).

This sequence belongs to the adaptor complexes large subunit family. As to quaternary structure, adaptor protein complex 2 (AP-2) is a heterotetramer composed of two large adaptins (alpha-type subunit AP2A1 or AP2A2 and beta-type subunit AP2B1), a medium adaptin (mu-type subunit AP2M1) and a small adaptin (sigma-type subunit AP2S1). Binds clathrin. Binds EPN1, EPS15, AMPH, SNAP91 and BIN1. Interacts with HIP1. Interacts with DGKD. Interacts with DENND1A, DENND1B and DENND1C. Interacts with FCHO1. Interacts with ATAT1; this interaction is required for efficient alpha-tubulin acetylation by ATAT1. Interacts with KIAA1107. Together with AP2B1 and AP2M1, it interacts with ADAM10; this interaction facilitates ADAM10 endocytosis from the plasma membrane during long-term potentiation in hippocampal neurons. Interacts with CLN3 (via dileucine motif). Interacts with ABCB11; this interaction regulates cell membrane expression of ABCB11 through its internalization in a clathrin-dependent manner and its subsequent degradation. Interacts with DNAJC6.

The protein localises to the cell membrane. The protein resides in the membrane. It localises to the coated pit. Its function is as follows. Component of the adaptor protein complex 2 (AP-2). Adaptor protein complexes function in protein transport via transport vesicles in different membrane traffic pathways. Adaptor protein complexes are vesicle coat components and appear to be involved in cargo selection and vesicle formation. AP-2 is involved in clathrin-dependent endocytosis in which cargo proteins are incorporated into vesicles surrounded by clathrin (clathrin-coated vesicles, CCVs) which are destined for fusion with the early endosome. The clathrin lattice serves as a mechanical scaffold but is itself unable to bind directly to membrane components. Clathrin-associated adaptor protein (AP) complexes which can bind directly to both the clathrin lattice and to the lipid and protein components of membranes are considered to be the major clathrin adaptors contributing the CCV formation. AP-2 also serves as a cargo receptor to selectively sort the membrane proteins involved in receptor-mediated endocytosis. AP-2 seems to play a role in the recycling of synaptic vesicle membranes from the presynaptic surface. AP-2 recognizes Y-X-X-[FILMV] (Y-X-X-Phi) and [ED]-X-X-X-L-[LI] endocytosis signal motifs within the cytosolic tails of transmembrane cargo molecules. AP-2 may also play a role in maintaining normal post-endocytic trafficking through the ARF6-regulated, non-clathrin pathway. During long-term potentiation in hippocampal neurons, AP-2 is responsible for the endocytosis of ADAM10. The AP-2 alpha subunit binds polyphosphoinositide-containing lipids, positioning AP-2 on the membrane. The AP-2 alpha subunit acts via its C-terminal appendage domain as a scaffolding platform for endocytic accessory proteins. The AP-2 alpha and AP-2 sigma subunits are thought to contribute to the recognition of the [ED]-X-X-X-L-[LI] motif. This Bos taurus (Bovine) protein is AP-2 complex subunit alpha-2.